The primary structure comprises 300 residues: Peptidyl-prolyl cis-trans isomerase E (300 aa).

The 79-residue stretch at 6–84 (RTIYVGGLAD…RTIRVNLAKP (79 aa)) folds into the RRM domain. Residues 142-298 (FFDIRIGGND…QKIVIYSCGE (157 aa)) enclose the PPIase cyclophilin-type domain.

It belongs to the cyclophilin-type PPIase family. PPIase E subfamily.

Its subcellular location is the nucleus. The catalysed reaction is [protein]-peptidylproline (omega=180) = [protein]-peptidylproline (omega=0). In terms of biological role, PPIases accelerate the folding of proteins. It catalyzes the cis-trans isomerization of proline imidic peptide bonds in oligopeptides. Combines RNA-binding and PPIase activities. This Drosophila melanogaster (Fruit fly) protein is Peptidyl-prolyl cis-trans isomerase E (cyp33).